The chain runs to 292 residues: Acetyl-coenzyme A carboxylase carboxyl transferase subunit beta (292 aa).

Residues 35–292 (VFSQCEQCNS…LKLHAKKVTS (258 aa)) form the CoA carboxyltransferase N-terminal domain. Residues cysteine 39, cysteine 42, cysteine 58, and cysteine 61 each contribute to the Zn(2+) site. A C4-type zinc finger spans residues 39–61 (CEQCNSAIYNKDLEHNYEVCPYC).

Belongs to the AccD/PCCB family. In terms of assembly, acetyl-CoA carboxylase is a heterohexamer composed of biotin carboxyl carrier protein (AccB), biotin carboxylase (AccC) and two subunits each of ACCase subunit alpha (AccA) and ACCase subunit beta (AccD). It depends on Zn(2+) as a cofactor.

It is found in the cytoplasm. The enzyme catalyses N(6)-carboxybiotinyl-L-lysyl-[protein] + acetyl-CoA = N(6)-biotinyl-L-lysyl-[protein] + malonyl-CoA. Its pathway is lipid metabolism; malonyl-CoA biosynthesis; malonyl-CoA from acetyl-CoA: step 1/1. Component of the acetyl coenzyme A carboxylase (ACC) complex. Biotin carboxylase (BC) catalyzes the carboxylation of biotin on its carrier protein (BCCP) and then the CO(2) group is transferred by the transcarboxylase to acetyl-CoA to form malonyl-CoA. This chain is Acetyl-coenzyme A carboxylase carboxyl transferase subunit beta, found in Acholeplasma laidlawii (strain PG-8A).